Here is a 151-residue protein sequence, read N- to C-terminus: D-ribose pyranase 1 (151 aa).

Catalysis depends on H20, which acts as the Proton donor. Residues D28, H98, and 121 to 123 (WGN) each bind substrate.

It belongs to the RbsD / FucU family. RbsD subfamily. In terms of assembly, homodecamer.

Its subcellular location is the cytoplasm. It catalyses the reaction beta-D-ribopyranose = beta-D-ribofuranose. Its pathway is carbohydrate metabolism; D-ribose degradation; D-ribose 5-phosphate from beta-D-ribopyranose: step 1/2. In terms of biological role, catalyzes the interconversion of beta-pyran and beta-furan forms of D-ribose. This chain is D-ribose pyranase 1, found in Streptomyces griseus subsp. griseus (strain JCM 4626 / CBS 651.72 / NBRC 13350 / KCC S-0626 / ISP 5235).